Here is a 34-residue protein sequence, read N- to C-terminus: Photosystem II reaction center protein M (34 aa).

A helical membrane pass occupies residues 5 to 25 (ILAFIATALFILVPTAFLLII).

Belongs to the PsbM family. In terms of assembly, PSII is composed of 1 copy each of membrane proteins PsbA, PsbB, PsbC, PsbD, PsbE, PsbF, PsbH, PsbI, PsbJ, PsbK, PsbL, PsbM, PsbT, PsbX, PsbY, PsbZ, Psb30/Ycf12, at least 3 peripheral proteins of the oxygen-evolving complex and a large number of cofactors. It forms dimeric complexes.

It localises to the plastid. The protein localises to the chloroplast thylakoid membrane. In terms of biological role, one of the components of the core complex of photosystem II (PSII). PSII is a light-driven water:plastoquinone oxidoreductase that uses light energy to abstract electrons from H(2)O, generating O(2) and a proton gradient subsequently used for ATP formation. It consists of a core antenna complex that captures photons, and an electron transfer chain that converts photonic excitation into a charge separation. This subunit is found at the monomer-monomer interface. The polypeptide is Photosystem II reaction center protein M (Buxus microphylla (Littleleaf boxwood)).